The primary structure comprises 361 residues: Phosphoserine aminotransferase (361 aa).

Arginine 42 contributes to the L-glutamate binding site. Residues 76-77, tryptophan 102, threonine 152, aspartate 172, and glutamine 195 each bind pyridoxal 5'-phosphate; that span reads AT. Lysine 196 is subject to N6-(pyridoxal phosphate)lysine. 237–238 is a pyridoxal 5'-phosphate binding site; the sequence is NT.

It belongs to the class-V pyridoxal-phosphate-dependent aminotransferase family. SerC subfamily. In terms of assembly, homodimer. The cofactor is pyridoxal 5'-phosphate.

The protein resides in the cytoplasm. It catalyses the reaction O-phospho-L-serine + 2-oxoglutarate = 3-phosphooxypyruvate + L-glutamate. It carries out the reaction 4-(phosphooxy)-L-threonine + 2-oxoglutarate = (R)-3-hydroxy-2-oxo-4-phosphooxybutanoate + L-glutamate. It participates in amino-acid biosynthesis; L-serine biosynthesis; L-serine from 3-phospho-D-glycerate: step 2/3. The protein operates within cofactor biosynthesis; pyridoxine 5'-phosphate biosynthesis; pyridoxine 5'-phosphate from D-erythrose 4-phosphate: step 3/5. Catalyzes the reversible conversion of 3-phosphohydroxypyruvate to phosphoserine and of 3-hydroxy-2-oxo-4-phosphonooxybutanoate to phosphohydroxythreonine. This chain is Phosphoserine aminotransferase, found in Stenotrophomonas maltophilia (strain K279a).